The primary structure comprises 311 residues: MSRAKAKDPRFPDFSFTVVEGARATRVPGGRTIEEIEPEYKIKGRTTFSAIFRYDPFDFWVGPFYVGFWGFVSVIGIIFGSYFYINETILKGPYSIPQNFFAGRIDPPPPELGLGFAAPGEPGFAWQMTVLFATIAFFGWMMRQVDISMKLDMGYHVPIAFGVAFSAWLVLQVIRPIALGMWHEGFVLGIMPHLDWVSNFGYRYNNFFYNPFHAIGITGLFASTWLLACHGSLILSAAQYRGPEGGDIENVFFRDVQYYSVGESGVHRLGYIFAIGGILSADLCILLSGWPVQDWVSFWNFWNNLPFWSGV.

3 helical membrane passes run 68-90 (FWGF…ETIL), 123-151 (GFAW…SMKL), and 156-178 (HVPI…RPIA). (7R,8Z)-bacteriochlorophyll b contacts are provided by H183 and H213. Residues 211–238 (PFHAIGITGLFASTWLLACHGSLILSAA) traverse the membrane as a helical segment. Position 230 (H230) interacts with Fe cation. F253 is a binding site for a ubiquinone. Residues 262–287 (GESGVHRLGYIFAIGGILSADLCILL) traverse the membrane as a helical segment. Fe cation is bound at residue H267.

It belongs to the reaction center PufL/M/PsbA/D family. Reaction center is composed of four bacteriochlorophylls, two bacteriopheophytins, two ubiquinones, one iron, and two highly hydrophobic polypeptide chains (designated L and M).

The protein localises to the cell membrane. Its function is as follows. The reaction center is a membrane-bound complex that mediates the initial photochemical event in the electron transfer process of photosynthesis. The protein is Reaction center protein L chain (pufL) of Chloroflexus aurantiacus (strain ATCC 29366 / DSM 635 / J-10-fl).